The chain runs to 328 residues: DNA-directed RNA polymerase subunit alpha (328 aa).

Residues Met-1 to Ser-231 are alpha N-terminal domain (alpha-NTD). Residues Met-252–Gln-328 form an alpha C-terminal domain (alpha-CTD) region.

This sequence belongs to the RNA polymerase alpha chain family. In terms of assembly, homodimer. The RNAP catalytic core consists of 2 alpha, 1 beta, 1 beta' and 1 omega subunit. When a sigma factor is associated with the core the holoenzyme is formed, which can initiate transcription.

The catalysed reaction is RNA(n) + a ribonucleoside 5'-triphosphate = RNA(n+1) + diphosphate. Functionally, DNA-dependent RNA polymerase catalyzes the transcription of DNA into RNA using the four ribonucleoside triphosphates as substrates. In Chloroherpeton thalassium (strain ATCC 35110 / GB-78), this protein is DNA-directed RNA polymerase subunit alpha.